A 92-amino-acid chain; its full sequence is Subtilisin inhibitor 1 (92 aa).

A compositionally biased stretch (polar residues) spans 1–12 (QEQGTNPSQEQN). The interval 1-31 (QEQGTNPSQEQNVPLPRNYKQALETNTPTKT) is disordered.

It belongs to the protease inhibitor I13 (potato type I serine protease inhibitor) family.

Functionally, inhibitor of subtilisin. This chain is Subtilisin inhibitor 1, found in Phaseolus angularis (Azuki bean).